A 423-amino-acid chain; its full sequence is Adenylosuccinate synthetase (423 aa).

Residues 12 to 18 (GDEGKGK) and 40 to 42 (GHT) contribute to the GTP site. Catalysis depends on Asp-13, which acts as the Proton acceptor. Mg(2+) is bound by residues Asp-13 and Gly-40. Residues 13-16 (DEGK), 38-41 (NAGH), Thr-129, Arg-143, Gln-224, Thr-239, and Arg-303 each bind IMP. His-41 acts as the Proton donor in catalysis. Residue 299–305 (SVTGRQR) coordinates substrate. Residues Arg-305, 331-333 (KGD), and 412-414 (SVG) contribute to the GTP site.

It belongs to the adenylosuccinate synthetase family. In terms of assembly, homodimer. Requires Mg(2+) as cofactor.

The protein resides in the cytoplasm. It catalyses the reaction IMP + L-aspartate + GTP = N(6)-(1,2-dicarboxyethyl)-AMP + GDP + phosphate + 2 H(+). The protein operates within purine metabolism; AMP biosynthesis via de novo pathway; AMP from IMP: step 1/2. Its function is as follows. Plays an important role in the de novo pathway of purine nucleotide biosynthesis. Catalyzes the first committed step in the biosynthesis of AMP from IMP. The sequence is that of Adenylosuccinate synthetase from Flavobacterium johnsoniae (strain ATCC 17061 / DSM 2064 / JCM 8514 / BCRC 14874 / CCUG 350202 / NBRC 14942 / NCIMB 11054 / UW101) (Cytophaga johnsonae).